A 217-amino-acid chain; its full sequence is Adenylate kinase (217 aa).

An ATP-binding site is contributed by 11–16 (GAGKGT). Residues 31–60 (STGDMFREAMANETPVGLEAKSYIDKGDLV) are NMP. AMP contacts are provided by residues Thr-32, Arg-37, 58 to 60 (DLV), 86 to 89 (GFPR), and Gln-93. Residues 127 to 165 (ARYICKNCGATYNKISNPTKVEGTCDRCGGHEFFQREDD) are LID. Residue Arg-128 participates in ATP binding. Cys-131 and Cys-134 together coordinate Zn(2+). 137–138 (TY) contributes to the ATP binding site. Residues Cys-151 and Cys-154 each coordinate Zn(2+). AMP contacts are provided by Arg-162 and Arg-173. Gln-201 contributes to the ATP binding site.

Belongs to the adenylate kinase family. As to quaternary structure, monomer.

The protein localises to the cytoplasm. The catalysed reaction is AMP + ATP = 2 ADP. The protein operates within purine metabolism; AMP biosynthesis via salvage pathway; AMP from ADP: step 1/1. Catalyzes the reversible transfer of the terminal phosphate group between ATP and AMP. Plays an important role in cellular energy homeostasis and in adenine nucleotide metabolism. The polypeptide is Adenylate kinase (Lactobacillus gasseri (strain ATCC 33323 / DSM 20243 / BCRC 14619 / CIP 102991 / JCM 1131 / KCTC 3163 / NCIMB 11718 / NCTC 13722 / AM63)).